A 245-amino-acid polypeptide reads, in one-letter code: Probable phosphatase Spro_1934 (245 aa).

The Zn(2+) site is built by His-7, His-9, His-15, His-40, Glu-73, His-101, His-131, Asp-192, and His-194.

Belongs to the PHP family. Homotrimer. Zn(2+) serves as cofactor.

The sequence is that of Probable phosphatase Spro_1934 from Serratia proteamaculans (strain 568).